The following is a 530-amino-acid chain: CTP synthase (530 aa).

The amidoligase domain stretch occupies residues 1-267; sequence MTKYVFVTGG…DDFVLNHFKM (267 aa). Ser-13 serves as a coordination point for CTP. Residue Ser-13 participates in UTP binding. ATP is bound at residue 14–19; the sequence is SLGKGI. Tyr-54 provides a ligand contact to L-glutamine. Asp-71 is a binding site for ATP. Mg(2+) contacts are provided by Asp-71 and Glu-141. CTP-binding positions include 148-150, 188-193, and Lys-224; these read DIE and KTKPTQ. UTP contacts are provided by residues 188–193 and Lys-224; that span reads KTKPTQ. Position 240 to 242 (240 to 242) interacts with ATP; it reads RDA. In terms of domain architecture, Glutamine amidotransferase type-1 spans 292–530; that stretch reads KIALVGKYIE…LFKAFIGATM (239 aa). Gly-354 lines the L-glutamine pocket. Catalysis depends on Cys-381, which acts as the Nucleophile; for glutamine hydrolysis. L-glutamine-binding positions include 382–385, Glu-405, and Arg-463; that span reads LGMQ. Residues His-508 and Glu-510 contribute to the active site.

It belongs to the CTP synthase family. As to quaternary structure, homotetramer.

The catalysed reaction is UTP + L-glutamine + ATP + H2O = CTP + L-glutamate + ADP + phosphate + 2 H(+). The enzyme catalyses L-glutamine + H2O = L-glutamate + NH4(+). It carries out the reaction UTP + NH4(+) + ATP = CTP + ADP + phosphate + 2 H(+). Its pathway is pyrimidine metabolism; CTP biosynthesis via de novo pathway; CTP from UDP: step 2/2. With respect to regulation, allosterically activated by GTP, when glutamine is the substrate; GTP has no effect on the reaction when ammonia is the substrate. The allosteric effector GTP functions by stabilizing the protein conformation that binds the tetrahedral intermediate(s) formed during glutamine hydrolysis. Inhibited by the product CTP, via allosteric rather than competitive inhibition. Catalyzes the ATP-dependent amination of UTP to CTP with either L-glutamine or ammonia as the source of nitrogen. Regulates intracellular CTP levels through interactions with the four ribonucleotide triphosphates. This chain is CTP synthase, found in Latilactobacillus sakei subsp. sakei (strain 23K) (Lactobacillus sakei subsp. sakei).